The sequence spans 209 residues: Guanylate kinase (209 aa).

Positions 9-188 constitute a Guanylate kinase-like domain; sequence GIMLVMSSPS…SVQQIKSIFI (180 aa). 16 to 23 contributes to the ATP binding site; it reads SPSGGGKT.

Belongs to the guanylate kinase family.

It localises to the cytoplasm. The catalysed reaction is GMP + ATP = GDP + ADP. Essential for recycling GMP and indirectly, cGMP. This chain is Guanylate kinase, found in Ehrlichia ruminantium (strain Gardel).